An 841-amino-acid chain; its full sequence is Envelope glycoprotein H (841 aa).

A signal peptide spans 1–17 (MFALVLAVVILPLWTTA). Residues Asn18, Asn45, and Asn217 are each glycosylated (N-linked (GlcNAc...) asparagine; by host). Residues 18-802 (NKSYVTPTPA…ERRQAIRMSG (785 aa)) lie on the Virion surface side of the membrane. Residues 246–309 (DSGRVEVNIG…DPGPSYRVYL (64 aa)) form an interaction with gL region. N-linked (GlcNAc...) asparagine; by host glycosylation is found at Asn317, Asn499, Asn522, Asn760, and Asn783. Residues 803–823 (QYLGASLGGAFLAVVGFGIIG) traverse the membrane as a helical segment. The Intravirion segment spans residues 824-841 (WMLCGNSRLREYNKIPLT).

This sequence belongs to the herpesviridae glycoprotein H family. As to quaternary structure, interacts with glycoprotein L (gL); this interaction is necessary for the correct processing and cell surface expression of gH. The heterodimer gH/gL seems to interact with gB trimers during fusion. In terms of processing, N-glycosylated, O-glycosylated, and sialylated.

It is found in the virion membrane. It localises to the host cell membrane. Its subcellular location is the host endosome membrane. Its function is as follows. The heterodimer glycoprotein H-glycoprotein L is required for the fusion of viral and plasma membranes leading to virus entry into the host cell. Following initial binding to host receptor, membrane fusion is mediated by the fusion machinery composed of gB and the heterodimer gH/gL. May also be involved in the fusion between the virion envelope and the outer nuclear membrane during virion morphogenesis. In Varicella-zoster virus (strain Oka vaccine) (HHV-3), this protein is Envelope glycoprotein H.